The primary structure comprises 464 residues: Cysteine--tRNA ligase (464 aa).

Residue cysteine 29 participates in Zn(2+) binding. A 'HIGH' region motif is present at residues 31–41; it reads ATVQGDPHIGH. 3 residues coordinate Zn(2+): cysteine 207, histidine 232, and glutamate 236. The short motif at 263–267 is the 'KMSKS' region element; that stretch reads KMSKS. Lysine 266 lines the ATP pocket.

It belongs to the class-I aminoacyl-tRNA synthetase family. Monomer. Requires Zn(2+) as cofactor.

Its subcellular location is the cytoplasm. The enzyme catalyses tRNA(Cys) + L-cysteine + ATP = L-cysteinyl-tRNA(Cys) + AMP + diphosphate. This is Cysteine--tRNA ligase from Rhodococcus jostii (strain RHA1).